The primary structure comprises 158 residues: uncharacterized protein (158 aa).

Transmembrane regions (helical) follow at residues 42–62 (FHFA…GFLY), 71–91 (WIFI…HLIA), 102–122 (LLTG…QMFL), and 130–150 (ELII…PLLF).

It is found in the cell membrane. This is an uncharacterized protein from Bacillus subtilis (strain 168).